A 380-amino-acid polypeptide reads, in one-letter code: 2-aminoethylphosphonate--pyruvate transaminase (380 aa).

Lys204 carries the N6-(pyridoxal phosphate)lysine modification.

The protein belongs to the class-V pyridoxal-phosphate-dependent aminotransferase family. PhnW subfamily. In terms of assembly, homodimer. Pyridoxal 5'-phosphate serves as cofactor.

The catalysed reaction is (2-aminoethyl)phosphonate + pyruvate = phosphonoacetaldehyde + L-alanine. Its function is as follows. Involved in phosphonate degradation. The chain is 2-aminoethylphosphonate--pyruvate transaminase from Aeromonas hydrophila subsp. hydrophila (strain ATCC 7966 / DSM 30187 / BCRC 13018 / CCUG 14551 / JCM 1027 / KCTC 2358 / NCIMB 9240 / NCTC 8049).